Reading from the N-terminus, the 561-residue chain is Mercuric reductase (561 aa).

The region spanning Met1–Thr65 is the HMA domain. The a metal cation site is built by Cys11 and Cys14. Ala110, Gly130, and Thr135 together coordinate FAD. Residues Cys136 and Cys141 are joined by a disulfide bond. Residues Lys145, Ala211, Asp403, and Val411 each coordinate FAD. Hg(2+) contacts are provided by Cys558 and Cys559.

This sequence belongs to the class-I pyridine nucleotide-disulfide oxidoreductase family. As to quaternary structure, homodimer. FAD is required as a cofactor.

The enzyme catalyses Hg + NADP(+) + H(+) = Hg(2+) + NADPH. Resistance to Hg(2+) in bacteria appears to be governed by a specialized system which includes mercuric reductase. MerA protein is responsible for volatilizing mercury as Hg(0). The polypeptide is Mercuric reductase (merA) (Enterobacter agglomerans (Erwinia herbicola)).